A 470-amino-acid polypeptide reads, in one-letter code: Putative bifunctional phosphatase/peptidyl-prolyl cis-trans isomerase (470 aa).

The Nucleophile role is filled by D22. Mg(2+)-binding residues include D22, D24, and D221. The 183-residue stretch at 286-468 (TGPKVTIKTN…EDVIIETIEV (183 aa)) folds into the PPIase cyclophilin-type domain.

This sequence in the C-terminal section; belongs to the cyclophilin-type PPIase family. PPIL1 subfamily. The cofactor is Mg(2+).

It catalyses the reaction [protein]-peptidylproline (omega=180) = [protein]-peptidylproline (omega=0). Functionally, PPIases accelerate the folding of proteins. It catalyzes the cis-trans isomerization of proline imidic peptide bonds in oligopeptides. This is Putative bifunctional phosphatase/peptidyl-prolyl cis-trans isomerase from Streptococcus pyogenes serotype M6 (strain ATCC BAA-946 / MGAS10394).